Reading from the N-terminus, the 202-residue chain is Protein lin-28 homolog A (202 aa).

Residues 1–31 are disordered; that stretch reads MGSVSNQQFAGAKPGEEPSGDSPKAENESQP. Residues 33-106 enclose the CSD domain; it reads HGSGICKWFN…GLESIRVTGP (74 aa). The flexible linker stretch occupies residues 107-130; sequence GGVFCIGSERRPKSKSLQKRRSKG. 2 consecutive CCHC-type zinc fingers follow at residues 131 to 148 and 153 to 170; these read DRCY…ECKL and KKCH…NCPA. Zn(2+)-binding residues include Cys133, Cys136, His141, Cys146, Cys155, Cys158, His163, and Cys168. A disordered region spans residues 169-202; that stretch reads PAKAQQSPSSQGKPAYFREKEDMHSSALLPETRE.

Belongs to the lin-28 family. As to quaternary structure, monomer.

The protein localises to the cytoplasm. It localises to the rough endoplasmic reticulum. Its subcellular location is the P-body. It is found in the stress granule. The protein resides in the nucleus. The protein localises to the nucleolus. Functionally, RNA-binding protein that inhibits processing of pre-let-7 miRNAs and regulates translation of mRNAs that control developmental timing, pluripotency and metabolism. Seems to recognize a common structural G-quartet (G4) feature in its miRNA and mRNA targets. 'Translational enhancer' that drives specific mRNAs to polysomes and increases the efficiency of protein synthesis. Its association with the translational machinery and target mRNAs results in an increased number of initiation events per molecule of mRNA and, indirectly, in mRNA stabilization. Suppressor of microRNA (miRNA) biogenesis, including that of let-7. Binds specific target miRNA precursors (pre-miRNAs), recognizing an 5'-GGAG-3' motif found in their terminal loop, and recruits uridylyltransferase. This results in the terminal uridylation of target pre-miRNAs. Uridylated pre-miRNAs fail to be processed by Dicer and undergo degradation. Localized to the periendoplasmic reticulum area, binds to a large number of spliced mRNAs and inhibits the translation of mRNAs destined for the ER, reducing the synthesis of transmembrane proteins, ER or Golgi lumen proteins, and secretory proteins. Binds to and enhances the translation of mRNAs for several metabolic enzymes, increasing glycolysis and oxidative phosphorylation. Which, with the let-7 repression may enhance tissue repair in adult tissue. This chain is Protein lin-28 homolog A (LIN28A), found in Gallus gallus (Chicken).